Here is a 117-residue protein sequence, read N- to C-terminus: Large ribosomal subunit protein bL19 (117 aa).

The protein belongs to the bacterial ribosomal protein bL19 family.

Functionally, this protein is located at the 30S-50S ribosomal subunit interface and may play a role in the structure and function of the aminoacyl-tRNA binding site. In Aliivibrio salmonicida (strain LFI1238) (Vibrio salmonicida (strain LFI1238)), this protein is Large ribosomal subunit protein bL19.